The sequence spans 221 residues: Ribonuclease T (221 aa).

The 175-residue stretch at 20–194 (VVIDIETAGF…YDTLQTANLF (175 aa)) folds into the Exonuclease domain. The Mg(2+) site is built by Asp23, Glu25, His181, and Asp186. The Proton donor/acceptor role is filled by His181.

It belongs to the RNase T family. Homodimer. Mg(2+) serves as cofactor.

Functionally, trims short 3' overhangs of a variety of RNA species, leaving a one or two nucleotide 3' overhang. Responsible for the end-turnover of tRNA: specifically removes the terminal AMP residue from uncharged tRNA (tRNA-C-C-A). Also appears to be involved in tRNA biosynthesis. This chain is Ribonuclease T, found in Buchnera aphidicola subsp. Acyrthosiphon pisum (strain APS) (Acyrthosiphon pisum symbiotic bacterium).